A 216-amino-acid polypeptide reads, in one-letter code: PEP-dependent dihydroxyacetone kinase 2, ADP-binding subunit DhaL (216 aa).

Residues 9–210 form the DhaL domain; it reads AFFGHVLQDM…SWMLMNVILE (202 aa). D33, D38, and D40 together coordinate Mg(2+). ADP is bound by residues 41-44, 84-85, G126, M135, R182, and 195-197; these read HGIN, AS, and DPG.

In terms of assembly, homodimer. The dihydroxyacetone kinase complex is composed of a homodimer of DhaM, a homodimer of DhaK and the subunit DhaL. The cofactor is Mg(2+).

Its subcellular location is the cytoplasm. The catalysed reaction is dihydroxyacetone + phosphoenolpyruvate = dihydroxyacetone phosphate + pyruvate. It functions in the pathway polyol metabolism; glycerol degradation. Functionally, ADP-binding subunit of the dihydroxyacetone kinase, which is responsible for the phosphoenolpyruvate (PEP)-dependent phosphorylation of dihydroxyacetone. DhaL-ADP is converted to DhaL-ATP via a phosphoryl group transfer from DhaM and transmits it to dihydroxyacetone binds to DhaK. The sequence is that of PEP-dependent dihydroxyacetone kinase 2, ADP-binding subunit DhaL from Listeria innocua serovar 6a (strain ATCC BAA-680 / CLIP 11262).